Consider the following 47-residue polypeptide: MKKFRWLVLIVVVLACLVLWAQVINIMCDQDVQFFSGICAINKFIPW.

The helical transmembrane segment at 6-26 (WLVLIVVVLACLVLWAQVINI) threads the bilayer.

Belongs to the MgrB family. As to quaternary structure, may form homooligomers. Probably interacts with the periplasmic domain of PhoQ.

The protein localises to the cell inner membrane. In terms of biological role, phoP-regulated transcription is redox-sensitive, being activated when the periplasm becomes more reducing. MgrB acts between DsbA/DsbB and PhoP/PhoQ in this pathway. Represses PhoP/PhoQ signaling, possibly by binding to the periplasmic domain of PhoQ, altering its activity and that of downstream effector PhoP. The sequence is that of PhoP/PhoQ regulator MgrB from Escherichia fergusonii (strain ATCC 35469 / DSM 13698 / CCUG 18766 / IAM 14443 / JCM 21226 / LMG 7866 / NBRC 102419 / NCTC 12128 / CDC 0568-73).